The sequence spans 613 residues: Dihydroxy-acid dehydratase (613 aa).

Mg(2+) is bound at residue D81. C122 contributes to the [2Fe-2S] cluster binding site. Mg(2+) contacts are provided by D123 and K124. K124 carries the post-translational modification N6-carboxylysine. A [2Fe-2S] cluster-binding site is contributed by C195. Residue E491 coordinates Mg(2+). S517 serves as the catalytic Proton acceptor.

It belongs to the IlvD/Edd family. In terms of assembly, homodimer. [2Fe-2S] cluster is required as a cofactor. Requires Mg(2+) as cofactor.

The catalysed reaction is (2R)-2,3-dihydroxy-3-methylbutanoate = 3-methyl-2-oxobutanoate + H2O. It catalyses the reaction (2R,3R)-2,3-dihydroxy-3-methylpentanoate = (S)-3-methyl-2-oxopentanoate + H2O. Its pathway is amino-acid biosynthesis; L-isoleucine biosynthesis; L-isoleucine from 2-oxobutanoate: step 3/4. It participates in amino-acid biosynthesis; L-valine biosynthesis; L-valine from pyruvate: step 3/4. Functions in the biosynthesis of branched-chain amino acids. Catalyzes the dehydration of (2R,3R)-2,3-dihydroxy-3-methylpentanoate (2,3-dihydroxy-3-methylvalerate) into 2-oxo-3-methylpentanoate (2-oxo-3-methylvalerate) and of (2R)-2,3-dihydroxy-3-methylbutanoate (2,3-dihydroxyisovalerate) into 2-oxo-3-methylbutanoate (2-oxoisovalerate), the penultimate precursor to L-isoleucine and L-valine, respectively. This Aliivibrio fischeri (strain ATCC 700601 / ES114) (Vibrio fischeri) protein is Dihydroxy-acid dehydratase.